A 570-amino-acid chain; its full sequence is Sulfite reductase [NADPH] hemoprotein beta-component (570 aa).

[4Fe-4S] cluster-binding residues include C434, C440, C479, and C483. C483 contacts siroheme.

It belongs to the nitrite and sulfite reductase 4Fe-4S domain family. Alpha(8)-beta(8). The alpha component is a flavoprotein, the beta component is a hemoprotein. Requires siroheme as cofactor. It depends on [4Fe-4S] cluster as a cofactor.

The enzyme catalyses hydrogen sulfide + 3 NADP(+) + 3 H2O = sulfite + 3 NADPH + 4 H(+). It functions in the pathway sulfur metabolism; hydrogen sulfide biosynthesis; hydrogen sulfide from sulfite (NADPH route): step 1/1. Its function is as follows. Component of the sulfite reductase complex that catalyzes the 6-electron reduction of sulfite to sulfide. This is one of several activities required for the biosynthesis of L-cysteine from sulfate. This is Sulfite reductase [NADPH] hemoprotein beta-component from Salmonella newport (strain SL254).